Here is a 329-residue protein sequence, read N- to C-terminus: UPF0158 protein CT_429 (329 aa).

The tract at residues 292-329 (GYDSDGETGDFFDEEYDDEEEEIKPKKTTKRGRKKSRS) is disordered. The span at 295 to 313 (SDGETGDFFDEEYDDEEEE) shows a compositional bias: acidic residues. The span at 317–329 (KKTTKRGRKKSRS) shows a compositional bias: basic residues.

Belongs to the UPF0158 family.

This chain is UPF0158 protein CT_429, found in Chlamydia trachomatis serovar D (strain ATCC VR-885 / DSM 19411 / UW-3/Cx).